We begin with the raw amino-acid sequence, 99 residues long: Ubiquitin-related modifier 1 (99 aa).

Residue Gly99 is modified to 1-thioglycine. Gly99 participates in a covalent cross-link: Glycyl lysine isopeptide (Gly-Lys) (interchain with K-? in acceptor proteins).

This sequence belongs to the URM1 family. In terms of processing, C-terminal thiocarboxylation occurs in 2 steps, it is first acyl-adenylated (-COAMP) via the hesA/moeB/thiF part of UBA4, then thiocarboxylated (-COSH) via the rhodanese domain of UBA4.

It is found in the cytoplasm. It participates in tRNA modification; 5-methoxycarbonylmethyl-2-thiouridine-tRNA biosynthesis. Its function is as follows. Acts as a sulfur carrier required for 2-thiolation of mcm(5)S(2)U at tRNA wobble positions of cytosolic tRNA(Lys), tRNA(Glu) and tRNA(Gln). Serves as sulfur donor in tRNA 2-thiolation reaction by being thiocarboxylated (-COSH) at its C-terminus by the MOCS3 homolog UBA4. The sulfur is then transferred to tRNA to form 2-thiolation of mcm(5)S(2)U. Prior mcm(5) tRNA modification by the elongator complex is required for 2-thiolation. Also acts as a ubiquitin-like protein (UBL) that is covalently conjugated via an isopeptide bond to lysine residues of target proteins such as AHP1. The thiocarboxylated form serves as substrate for conjugation and oxidative stress specifically induces the formation of UBL-protein conjugates. This chain is Ubiquitin-related modifier 1, found in Yarrowia lipolytica (strain CLIB 122 / E 150) (Yeast).